The following is a 64-amino-acid chain: Ferredoxin-like protein in nif region (64 aa).

The 4Fe-4S ferredoxin-type domain maps to 2 to 30; it reads AFKIIASQCTQCGACEFECPSGAISFKTD. The [4Fe-4S] cluster site is built by C10, C13, C16, C20, C39, C42, C51, and C55.

Requires [4Fe-4S] cluster as cofactor.

The polypeptide is Ferredoxin-like protein in nif region (fdxN) (Rhizobium leguminosarum bv. trifolii).